The sequence spans 36 residues: GDCHKFWGWCRDEPDPCCEHLTCSTKHGWCVWDGSF.

3 disulfide bridges follow: Cys3–Cys18, Cys10–Cys23, and Cys17–Cys30. The residue at position 36 (Phe36) is a Phenylalanine amide.

Belongs to the neurotoxin 10 (Hwtx-1) family. In terms of tissue distribution, expressed by the venom gland.

The protein localises to the secreted. Inhibitor of voltage-gated potassium and sodium channels. Among other potassium channels, it selectively inhibits Kv10.1/KCNH1/EAG1 (IC(50)=236 nM) by shifting the voltage dependence of channel activation in a depolarising direction, it shows a maximum inhibition of 80% at saturating concentrations, it shows fast on-rates, and is poorly reversible. It also slightly affects channel inactivation, when the membrane is highly depolarised (&gt;+80 mV). It shows similar potency on Nav1.7/SCN9A (IC(50)=222 nM) and lower potency on Nav1.2/SCN2A (IC(50)=519 nM). The polypeptide is Mu/kappa-theraphotoxin-Ap1a (Avicularia purpurea (Ecuadorian purple pinktoe tarantula)).